The sequence spans 507 residues: Acetylcholine receptor subunit beta-type lev-1 (507 aa).

Residues 1–31 (MMLGGGGGCGAGGTWLGFLVFLAVSLRNHST) form the signal peptide. 3 N-linked (GlcNAc...) asparagine glycosylation sites follow: N28, N58, and N109. Topologically, residues 32-138 (CEDIDAEDRL…NNADGNYEVS (107 aa)) are extracellular. The helical transmembrane segment at 139–159 (FMCNVLILSTGTVLWVPPAIY) threads the bilayer. A disulfide bond links C163 and C177. 3 consecutive transmembrane segments (helical) span residues 243–263 (VVLI…FYLP), 271–291 (GLTM…SKIL), and 305–325 (LLLT…ICNI). A disordered region spans residues 373-392 (GPSVEENPMRSGEHHPLCRH). Residues 379–392 (NPMRSGEHHPLCRH) show a composition bias toward basic and acidic residues. A helical transmembrane segment spans residues 454-474 (FLLYGFFGATVGGTIGIIFTA).

The protein belongs to the ligand-gated ion channel (TC 1.A.9) family. Acetylcholine receptor (TC 1.A.9.1) subfamily. In terms of assembly, interacts with unc-29. Component of nicotinic acetylcholine receptor composed of 2 non-alpha subunits lev-1 and unc-29, and 3 alpha subunits unc-38, unc-63 and lev-8.

The protein localises to the postsynaptic cell membrane. It is found in the cell membrane. Functionally, non-alpha subunit of nicotinic acetylcholine receptor (nAChR). Involved in nAChR sensitivity to nicotine. The chain is Acetylcholine receptor subunit beta-type lev-1 (lev-1) from Caenorhabditis elegans.